The following is a 158-amino-acid chain: Hypoxanthine DNA glycosylase (158 aa).

N39 is a catalytic residue.

Belongs to the uracil-DNA glycosylase (UDG) superfamily. Type 6 (HDG) family.

Functionally, excises hypoxanthine, a deamination product of adenine, from double-stranded DNA. Acts on double-stranded DNA containing G/I, T/I, A/I and C/I base pairs, but not on single-stranded inosine-containing DNA. Also has minor xanthine DNA glycosylase activity. Lacks any detectable uracil-DNA glycosylase activity. In Methanosarcina barkeri (strain Fusaro / DSM 804), this protein is Hypoxanthine DNA glycosylase.